We begin with the raw amino-acid sequence, 274 residues long: Thiamine kinase (274 aa).

This sequence belongs to the thiamine kinase family.

It catalyses the reaction thiamine + ATP = thiamine phosphate + ADP + H(+). Its pathway is cofactor biosynthesis; thiamine diphosphate biosynthesis; thiamine phosphate from thiamine: step 1/1. Catalyzes the ATP-dependent phosphorylation of thiamine to thiamine phosphate. Is involved in thiamine salvage. The polypeptide is Thiamine kinase (Salmonella choleraesuis (strain SC-B67)).